Here is a 364-residue protein sequence, read N- to C-terminus: Eukaryotic translation initiation factor 3 subunit H (364 aa).

Residues 13–162 enclose the MPN domain; that stretch reads VQVDALVAIK…LRAYRLSPSF (150 aa).

Belongs to the eIF-3 subunit H family. In terms of assembly, component of the eukaryotic translation initiation factor 3 (eIF-3) complex.

It is found in the cytoplasm. Component of the eukaryotic translation initiation factor 3 (eIF-3) complex, which is involved in protein synthesis of a specialized repertoire of mRNAs and, together with other initiation factors, stimulates binding of mRNA and methionyl-tRNAi to the 40S ribosome. The eIF-3 complex specifically targets and initiates translation of a subset of mRNAs involved in cell proliferation. The protein is Eukaryotic translation initiation factor 3 subunit H of Phaeosphaeria nodorum (strain SN15 / ATCC MYA-4574 / FGSC 10173) (Glume blotch fungus).